The sequence spans 91 residues: Teretoxin Tan6.2 (91 aa).

Residues 1-21 form the signal peptide; sequence MATSGRLLCVCLVLGLVFGSL. Positions 22-50 are excised as a propeptide; the sequence is GYPVMEKKRAGKNFDLGTIANWAWQIGEK.

The protein belongs to the teretoxin M (TM) superfamily. Post-translationally, contains 3 disulfide bonds. Expressed by the venom duct.

It is found in the secreted. The chain is Teretoxin Tan6.2 from Terebra anilis (Auger snail).